A 397-amino-acid chain; its full sequence is Lipoyl synthase 2, chloroplastic (397 aa).

A chloroplast-targeting transit peptide spans 1-35; it reads MIEQSLSKPSFSLSIPIPKAPKSKSSFFCSYSKIR. The segment at 49–85 is disordered; the sequence is AKHPQNSTTINNGSSSSASVDLKNNEKGPYPYPGGGK. The segment covering 54 to 67 has biased composition (low complexity); that stretch reads NSTTINNGSSSSAS. [4Fe-4S] cluster is bound by residues Cys128, Cys133, Cys139, Cys159, Cys163, Cys166, and Ser374. Positions 142 to 363 constitute a Radical SAM core domain; sequence GGGDGIATAT…KEYGESIGFR (222 aa).

Belongs to the radical SAM superfamily. Lipoyl synthase family. The cofactor is [4Fe-4S] cluster.

The protein localises to the plastid. It is found in the chloroplast. It catalyses the reaction [[Fe-S] cluster scaffold protein carrying a second [4Fe-4S](2+) cluster] + N(6)-octanoyl-L-lysyl-[protein] + 2 oxidized [2Fe-2S]-[ferredoxin] + 2 S-adenosyl-L-methionine + 4 H(+) = [[Fe-S] cluster scaffold protein] + N(6)-[(R)-dihydrolipoyl]-L-lysyl-[protein] + 4 Fe(3+) + 2 hydrogen sulfide + 2 5'-deoxyadenosine + 2 L-methionine + 2 reduced [2Fe-2S]-[ferredoxin]. It functions in the pathway protein modification; protein lipoylation via endogenous pathway; protein N(6)-(lipoyl)lysine from octanoyl-[acyl-carrier-protein]: step 2/2. Its function is as follows. Catalyzes the radical-mediated insertion of two sulfur atoms into the C-6 and C-8 positions of the octanoyl moiety bound to the lipoyl domains of lipoate-dependent enzymes, thereby converting the octanoylated domains into lipoylated derivatives. The chain is Lipoyl synthase 2, chloroplastic from Populus trichocarpa (Western balsam poplar).